The sequence spans 228 residues: 7-cyano-7-deazaguanine synthase (228 aa).

Residue 10–20 (FSGGQDSTTLA) participates in ATP binding. Residues C190, C205, C208, and C211 each coordinate Zn(2+).

It belongs to the QueC family. Requires Zn(2+) as cofactor.

It catalyses the reaction 7-carboxy-7-deazaguanine + NH4(+) + ATP = 7-cyano-7-deazaguanine + ADP + phosphate + H2O + H(+). Its pathway is purine metabolism; 7-cyano-7-deazaguanine biosynthesis. Its function is as follows. Catalyzes the ATP-dependent conversion of 7-carboxy-7-deazaguanine (CDG) to 7-cyano-7-deazaguanine (preQ(0)). This chain is 7-cyano-7-deazaguanine synthase, found in Helicobacter pylori (strain HPAG1).